The following is a 200-amino-acid chain: Recombination protein RecR (200 aa).

The segment at 60–75 (CVYCQALTEDDVCNIC) adopts a C4-type zinc-finger fold. Residues 83 to 177 (TKLCIIESML…KISRIGFGVP (95 aa)) enclose the Toprim domain.

Belongs to the RecR family.

May play a role in DNA repair. It seems to be involved in an RecBC-independent recombinational process of DNA repair. It may act with RecF and RecO. The polypeptide is Recombination protein RecR (Francisella tularensis subsp. tularensis (strain WY96-3418)).